Consider the following 202-residue polypeptide: Holliday junction branch migration complex subunit RuvA (202 aa).

The tract at residues 1–64 (MIGRLRGSLA…EDAHLLYGFY (64 aa)) is domain I. The interval 65 to 143 (EKRERELFRE…AWEALPGTFT (79 aa)) is domain II. Positions 144-153 (LVSNGPNQAE) are flexible linker. The domain III stretch occupies residues 154-202 (PVASAESDAVSALISLGYKPQEASKAVSAIKEKDLSSADLIRRALKGMG).

Belongs to the RuvA family. As to quaternary structure, homotetramer. Forms an RuvA(8)-RuvB(12)-Holliday junction (HJ) complex. HJ DNA is sandwiched between 2 RuvA tetramers; dsDNA enters through RuvA and exits via RuvB. An RuvB hexamer assembles on each DNA strand where it exits the tetramer. Each RuvB hexamer is contacted by two RuvA subunits (via domain III) on 2 adjacent RuvB subunits; this complex drives branch migration. In the full resolvosome a probable DNA-RuvA(4)-RuvB(12)-RuvC(2) complex forms which resolves the HJ.

It localises to the cytoplasm. The RuvA-RuvB-RuvC complex processes Holliday junction (HJ) DNA during genetic recombination and DNA repair, while the RuvA-RuvB complex plays an important role in the rescue of blocked DNA replication forks via replication fork reversal (RFR). RuvA specifically binds to HJ cruciform DNA, conferring on it an open structure. The RuvB hexamer acts as an ATP-dependent pump, pulling dsDNA into and through the RuvAB complex. HJ branch migration allows RuvC to scan DNA until it finds its consensus sequence, where it cleaves and resolves the cruciform DNA. The chain is Holliday junction branch migration complex subunit RuvA from Pseudomonas syringae pv. syringae (strain B728a).